We begin with the raw amino-acid sequence, 403 residues long: Ribosomal RNA large subunit methyltransferase I (403 aa).

Positions 9-88 (YPRLVLSKGR…ESIDIAFFTR (80 aa)) constitute a PUA domain.

This sequence belongs to the methyltransferase superfamily. RlmI family.

It is found in the cytoplasm. The catalysed reaction is cytidine(1962) in 23S rRNA + S-adenosyl-L-methionine = 5-methylcytidine(1962) in 23S rRNA + S-adenosyl-L-homocysteine + H(+). Specifically methylates the cytosine at position 1962 (m5C1962) of 23S rRNA. This Salmonella agona (strain SL483) protein is Ribosomal RNA large subunit methyltransferase I.